The primary structure comprises 425 residues: Kynureninase (425 aa).

Pyridoxal 5'-phosphate-binding positions include leucine 105, threonine 106, 133 to 136 (FPSD), aspartate 218, histidine 221, and tyrosine 243. Position 244 is an N6-(pyridoxal phosphate)lysine (lysine 244). Tryptophan 274 and asparagine 302 together coordinate pyridoxal 5'-phosphate.

It belongs to the kynureninase family. In terms of assembly, homodimer. Pyridoxal 5'-phosphate is required as a cofactor.

The enzyme catalyses L-kynurenine + H2O = anthranilate + L-alanine + H(+). It carries out the reaction 3-hydroxy-L-kynurenine + H2O = 3-hydroxyanthranilate + L-alanine + H(+). Its pathway is amino-acid degradation; L-kynurenine degradation; L-alanine and anthranilate from L-kynurenine: step 1/1. It participates in cofactor biosynthesis; NAD(+) biosynthesis; quinolinate from L-kynurenine: step 2/3. Its function is as follows. Catalyzes the cleavage of L-kynurenine (L-Kyn) and L-3-hydroxykynurenine (L-3OHKyn) into anthranilic acid (AA) and 3-hydroxyanthranilic acid (3-OHAA), respectively. The chain is Kynureninase from Flavobacterium johnsoniae (strain ATCC 17061 / DSM 2064 / JCM 8514 / BCRC 14874 / CCUG 350202 / NBRC 14942 / NCIMB 11054 / UW101) (Cytophaga johnsonae).